The primary structure comprises 336 residues: Dihydroorotate dehydrogenase (quinone) (336 aa).

Residues 62–66 (AGLDK) and Thr-86 contribute to the FMN site. Lys-66 serves as a coordination point for substrate. Residue 111 to 115 (NRMGF) participates in substrate binding. FMN contacts are provided by Asn-139 and Asn-172. Asn-172 contributes to the substrate binding site. The active-site Nucleophile is the Ser-175. Asn-177 serves as a coordination point for substrate. FMN contacts are provided by Lys-217 and Thr-245. A substrate-binding site is contributed by 246–247 (NT). Residues Gly-268, Gly-297, and 318–319 (YS) contribute to the FMN site.

This sequence belongs to the dihydroorotate dehydrogenase family. Type 2 subfamily. As to quaternary structure, monomer. FMN is required as a cofactor.

It localises to the cell membrane. It carries out the reaction (S)-dihydroorotate + a quinone = orotate + a quinol. It functions in the pathway pyrimidine metabolism; UMP biosynthesis via de novo pathway; orotate from (S)-dihydroorotate (quinone route): step 1/1. Its function is as follows. Catalyzes the conversion of dihydroorotate to orotate with quinone as electron acceptor. This Escherichia coli O17:K52:H18 (strain UMN026 / ExPEC) protein is Dihydroorotate dehydrogenase (quinone).